The following is a 102-amino-acid chain: Large ribosomal subunit protein bL21 (102 aa).

The protein belongs to the bacterial ribosomal protein bL21 family. In terms of assembly, part of the 50S ribosomal subunit. Contacts protein L20.

This protein binds to 23S rRNA in the presence of protein L20. The protein is Large ribosomal subunit protein bL21 of Campylobacter jejuni subsp. doylei (strain ATCC BAA-1458 / RM4099 / 269.97).